The primary structure comprises 678 residues: Vacuolar fusion protein mon1 (678 aa).

Disordered stretches follow at residues 1–116 (MDRD…YTSP), 449–474 (EENN…VTSP), and 568–591 (FETS…KTTE). A compositionally biased stretch (low complexity) spans 10–20 (NDGTNDNNDTT). The segment covering 63 to 77 (RPTTQVSTIDISTLS) has biased composition (polar residues). The segment covering 87–105 (STSATSATSATSATRSVAS) has biased composition (low complexity). Residues 106 to 116 (PQSSASGYTSP) are compositionally biased toward polar residues. Residues 450 to 459 (ENNSNNTNNP) are compositionally biased toward low complexity. Positions 460-471 (EQPPQPPPPKPV) are enriched in pro residues.

This sequence belongs to the MON1/SAND family.

It localises to the endosome. The protein resides in the multivesicular body membrane. It is found in the prevacuolar compartment membrane. Its subcellular location is the vacuole membrane. Its function is as follows. In complex with CCZ1, is required for multiple vacuole delivery pathways including the cytoplasm to vacuole transport (Cvt), autophagy, pexophagy and endocytosis. The MON1-CCZ1 complex acts at the fusion of vesicles with the vacuole, through its regulation of the SNARE complex during the coordinated priming and docking stages of fusion, and particularly at the stage of tethering/docking. This Neurospora crassa (strain ATCC 24698 / 74-OR23-1A / CBS 708.71 / DSM 1257 / FGSC 987) protein is Vacuolar fusion protein mon1 (apg-13).